We begin with the raw amino-acid sequence, 117 residues long: Non-specific lipid-transfer protein (117 aa).

Positions 1-26 (MASSAFVKFTCALVMCMMVAAPLAEA) are cleaved as a signal peptide. 4 disulfide bridges follow: cysteine 29-cysteine 76, cysteine 39-cysteine 53, cysteine 54-cysteine 99, and cysteine 74-cysteine 113.

The protein belongs to the plant LTP family.

Plant non-specific lipid-transfer proteins transfer phospholipids as well as galactolipids across membranes. May play a role in wax or cutin deposition in the cell walls of expanding epidermal cells and certain secretory tissues. Also has fungicide activity. The protein is Non-specific lipid-transfer protein (IWF1') of Beta vulgaris (Sugar beet).